The chain runs to 474 residues: tRNA-2-methylthio-N(6)-dimethylallyladenosine synthase (474 aa).

An MTTase N-terminal domain is found at 3–120; sequence KKLHIKTWGC…LPEMIEQIQQ (118 aa). Residues Cys12, Cys49, Cys83, Cys157, Cys161, and Cys164 each contribute to the [4Fe-4S] cluster site. The 233-residue stretch at 143-375 folds into the Radical SAM core domain; the sequence is RAEGPSAFVS…QDRITQQAMR (233 aa). The region spanning 378-441 is the TRAM domain; it reads RQMLGTVQRI…TNSLRGKFIR (64 aa).

It belongs to the methylthiotransferase family. MiaB subfamily. As to quaternary structure, monomer. [4Fe-4S] cluster serves as cofactor.

The protein localises to the cytoplasm. The catalysed reaction is N(6)-dimethylallyladenosine(37) in tRNA + (sulfur carrier)-SH + AH2 + 2 S-adenosyl-L-methionine = 2-methylsulfanyl-N(6)-dimethylallyladenosine(37) in tRNA + (sulfur carrier)-H + 5'-deoxyadenosine + L-methionine + A + S-adenosyl-L-homocysteine + 2 H(+). Functionally, catalyzes the methylthiolation of N6-(dimethylallyl)adenosine (i(6)A), leading to the formation of 2-methylthio-N6-(dimethylallyl)adenosine (ms(2)i(6)A) at position 37 in tRNAs that read codons beginning with uridine. This chain is tRNA-2-methylthio-N(6)-dimethylallyladenosine synthase, found in Shewanella loihica (strain ATCC BAA-1088 / PV-4).